The following is a 64-amino-acid chain: Large ribosomal subunit protein bL33 (64 aa).

Basic and acidic residues-rich tracts occupy residues 16-25 (EARTSSDPKR) and 33-42 (TTEKNRRNTT). The interval 16–42 (EARTSSDPKRSNGVSRYTTEKNRRNTT) is disordered.

It belongs to the bacterial ribosomal protein bL33 family.

In Prochlorococcus marinus (strain MIT 9301), this protein is Large ribosomal subunit protein bL33.